Here is a 380-residue protein sequence, read N- to C-terminus: tRNA(Met) cytidine acetate ligase (380 aa).

Residues 7 to 20 (ITEY…HLYH), glycine 100, asparagine 153, and arginine 178 each bind ATP.

This sequence belongs to the TmcAL family.

It is found in the cytoplasm. It catalyses the reaction cytidine(34) in elongator tRNA(Met) + acetate + ATP = N(4)-acetylcytidine(34) in elongator tRNA(Met) + AMP + diphosphate. In terms of biological role, catalyzes the formation of N(4)-acetylcytidine (ac(4)C) at the wobble position of elongator tRNA(Met), using acetate and ATP as substrates. First activates an acetate ion to form acetyladenylate (Ac-AMP) and then transfers the acetyl group to tRNA to form ac(4)C34. The polypeptide is tRNA(Met) cytidine acetate ligase (Staphylococcus haemolyticus (strain JCSC1435)).